Consider the following 101-residue polypeptide: Protein Tat (101 aa).

Positions 1–12 are enriched in basic and acidic residues; that stretch reads MEPVDPRLEPWK. The disordered stretch occupies residues 1 to 20; that stretch reads MEPVDPRLEPWKHPGSQPKT. The tract at residues 1–24 is interaction with human CREBBP; sequence MEPVDPRLEPWKHPGSQPKTACTT. The segment at 1–48 is transactivation; it reads MEPVDPRLEPWKHPGSQPKTACTTCYCKKCCFHCQVCFTKKALGISYG. 3 residues coordinate Zn(2+): C22, C25, and C27. A cysteine-rich region spans residues 22-37; that stretch reads CTTCYCKKCCFHCQVC. Position 28 is an N6-acetyllysine; by host PCAF (K28). Zn(2+)-binding residues include C30, H33, C34, and C37. Residues 38–48 form a core region; that stretch reads FTKKALGISYG. Residues 47 to 101 form a disordered region; sequence YGRKKRRQRRRAPEDSQTHQVSLPKQPAPQFRGDPTGPKESKKKVERETETHPVD. Positions 49-57 match the Nuclear localization signal, RNA-binding (TAR), and protein transduction motif; sequence RKKRRQRRR. Residues 49 to 86 are interaction with the host capping enzyme RNGTT; that stretch reads RKKRRQRRRAPEDSQTHQVSLPKQPAPQFRGDPTGPKE. An N6-acetyllysine; by host EP300 and GCN5L2 mark is found at K50 and K51. 2 positions are modified to asymmetric dimethylarginine; by host PRMT6: R52 and R53. Residue K71 forms a Glycyl lysine isopeptide (Lys-Gly) (interchain with G-Cter in ubiquitin) linkage. Residues 78–80 carry the Cell attachment site motif; the sequence is RGD. Over residues 83–101 the composition is skewed to basic and acidic residues; the sequence is GPKESKKKVERETETHPVD.

This sequence belongs to the lentiviruses Tat family. In terms of assembly, interacts with host CCNT1. Associates with the P-TEFb complex composed at least of Tat, P-TEFb (CDK9 and CCNT1), TAR RNA, RNA Pol II. Recruits the HATs CREBBP, TAF1/TFIID, EP300, PCAF and GCN5L2. Interacts with host KAT5/Tip60; this interaction targets the latter to degradation. Interacts with the host deacetylase SIRT1. Interacts with host capping enzyme RNGTT; this interaction stimulates RNGTT. Binds to host KDR, and to the host integrins ITGAV/ITGB3 and ITGA5/ITGB1. Interacts with host KPNB1/importin beta-1 without previous binding to KPNA1/importin alpha-1. Interacts with EIF2AK2. Interacts with host nucleosome assembly protein NAP1L1; this interaction may be required for the transport of Tat within the nucleus, since the two proteins interact at the nuclear rim. Interacts with host C1QBP/SF2P32; this interaction involves lysine-acetylated Tat. Interacts with the host chemokine receptors CCR2, CCR3 and CXCR4. Interacts with host DPP4/CD26; this interaction may trigger an anti-proliferative effect. Interacts with host LDLR. Interacts with the host extracellular matrix metalloproteinase MMP1. Interacts with host PRMT6; this interaction mediates Tat's methylation. Interacts with, and is ubiquitinated by MDM2/Hdm2. Interacts with host PSMC3 and HTATIP2. Interacts with STAB1; this interaction may overcome SATB1-mediated repression of IL2 and IL2RA (interleukin) in T cells by binding to the same domain than HDAC1. Interacts (when acetylated) with human CDK13, thereby increasing HIV-1 mRNA splicing and promoting the production of the doubly spliced HIV-1 protein Nef. Interacts with host TBP; this interaction modulates the activity of transcriptional pre-initiation complex. Interacts with host RELA. Interacts with host PLSCR1; this interaction negatively regulates Tat transactivation activity by altering its subcellular distribution. Post-translationally, asymmetrical arginine methylation by host PRMT6 seems to diminish the transactivation capacity of Tat and affects the interaction with host CCNT1. In terms of processing, acetylation by EP300, CREBBP, GCN5L2/GCN5 and PCAF regulates the transactivation activity of Tat. EP300-mediated acetylation of Lys-50 promotes dissociation of Tat from the TAR RNA through the competitive binding to PCAF's bromodomain. In addition, the non-acetylated Tat's N-terminus can also interact with PCAF. PCAF-mediated acetylation of Lys-28 enhances Tat's binding to CCNT1. Lys-50 is deacetylated by SIRT1. Polyubiquitination by host MDM2 does not target Tat to degradation, but activates its transactivation function and fosters interaction with CCNT1 and TAR RNA. Post-translationally, phosphorylated by EIF2AK2 on serine and threonine residues adjacent to the basic region important for TAR RNA binding and function. Phosphorylation of Tat by EIF2AK2 is dependent on the prior activation of EIF2AK2 by dsRNA.

The protein resides in the host nucleus. Its subcellular location is the host nucleolus. It localises to the host cytoplasm. The protein localises to the secreted. Transcriptional activator that increases RNA Pol II processivity, thereby increasing the level of full-length viral transcripts. Recognizes a hairpin structure at the 5'-LTR of the nascent viral mRNAs referred to as the transactivation responsive RNA element (TAR) and recruits the cyclin T1-CDK9 complex (P-TEFb complex) that will in turn hyperphosphorylate the RNA polymerase II to allow efficient elongation. The CDK9 component of P-TEFb and other Tat-activated kinases hyperphosphorylate the C-terminus of RNA Pol II that becomes stabilized and much more processive. Other factors such as HTATSF1/Tat-SF1, SUPT5H/SPT5, and HTATIP2 are also important for Tat's function. Besides its effect on RNA Pol II processivity, Tat induces chromatin remodeling of proviral genes by recruiting the histone acetyltransferases (HATs) CREBBP, EP300 and PCAF to the chromatin. This also contributes to the increase in proviral transcription rate, especially when the provirus integrates in transcriptionally silent region of the host genome. To ensure maximal activation of the LTR, Tat mediates nuclear translocation of NF-kappa-B by interacting with host RELA. Through its interaction with host TBP, Tat may also modulate transcription initiation. Tat can reactivate a latently infected cell by penetrating in it and transactivating its LTR promoter. In the cytoplasm, Tat is thought to act as a translational activator of HIV-1 mRNAs. Its function is as follows. Extracellular circulating Tat can be endocytosed by surrounding uninfected cells via the binding to several surface receptors such as CD26, CXCR4, heparan sulfate proteoglycans (HSPG) or LDLR. Neurons are rarely infected, but they internalize Tat via their LDLR. Through its interaction with nuclear HATs, Tat is potentially able to control the acetylation-dependent cellular gene expression. Modulates the expression of many cellular genes involved in cell survival, proliferation or in coding for cytokines or cytokine receptors. Tat plays a role in T-cell and neurons apoptosis. Tat induced neurotoxicity and apoptosis probably contribute to neuroAIDS. Circulating Tat also acts as a chemokine-like and/or growth factor-like molecule that binds to specific receptors on the surface of the cells, affecting many cellular pathways. In the vascular system, Tat binds to ITGAV/ITGB3 and ITGA5/ITGB1 integrins dimers at the surface of endothelial cells and competes with bFGF for heparin-binding sites, leading to an excess of soluble bFGF. The protein is Protein Tat of Human immunodeficiency virus type 1 group M subtype B (isolate MN) (HIV-1).